Here is a 453-residue protein sequence, read N- to C-terminus: Carbamoyl phosphate synthase arginine-specific small chain (453 aa).

The transit peptide at 1–13 (MFSKLAANFAQRA) directs the protein to the mitochondrion. Residues 233–420 (HVALIDCGVK…LENVRAAKSA (188 aa)) enclose the Glutamine amidotransferase type-1 domain. Residue Cys-309 is the Nucleophile of the active site. Catalysis depends on residues His-393 and Glu-395.

It belongs to the CarA family. In terms of assembly, heterodimer composed of 2 chains; the small (or glutamine) chain promotes the hydrolysis of glutamine to ammonia, which is used by the large (or ammonia) chain to synthesize carbamoyl phosphate.

It localises to the mitochondrion matrix. The enzyme catalyses hydrogencarbonate + L-glutamine + 2 ATP + H2O = carbamoyl phosphate + L-glutamate + 2 ADP + phosphate + 2 H(+). It carries out the reaction L-glutamine + H2O = L-glutamate + NH4(+). It functions in the pathway amino-acid biosynthesis; L-arginine biosynthesis; carbamoyl phosphate from bicarbonate: step 1/1. Its function is as follows. Small subunit of the arginine-specific carbamoyl phosphate synthase (CPSase). CPSase catalyzes the formation of carbamoyl phosphate from the ammonia moiety of glutamine, carbonate, and phosphate donated by ATP, the first step of the arginine biosynthetic pathway. The small subunit (glutamine amidotransferase) binds and cleaves glutamine to supply the large subunit with the substrate ammonia. This chain is Carbamoyl phosphate synthase arginine-specific small chain (cpa1), found in Hypocrea virens (Gliocladium virens).